The following is a 176-amino-acid chain: Sigma intracellular receptor 2 (176 aa).

The Cytoplasmic portion of the chain corresponds to 1-9; it reads MGTLGARRG. A helical transmembrane segment spans residues 10 to 30; that stretch reads LEWFLGFYFLSHIPITLLMDL. An EXPERA domain is found at 10–158; that stretch reads LEWFLGFYFL…PYFLIPLILL (149 aa). Topologically, residues 31-68 are lumenal; sequence QGVLPRDLYPVELRNLQQWYIEEFKDPLLQTPPAWFKS. Residues 69–89 form a helical membrane-spanning segment; it reads FLFCELVFQLPFFPIAAYAFF. Cholesterol is bound by residues V75 and Q77. Over 90–99 the chain is Cytoplasmic; sequence KGGCKWIRTP. Residues 100-120 form a helical membrane-spanning segment; the sequence is AIIYSVHTMTTLIPILSTLLL. The Lumenal segment spans residues 121 to 141; it reads DDFSKASHFRGQGPKTFQERL. Residues 142–162 traverse the membrane as a helical segment; that stretch reads FLISVYIPYFLIPLILLLFMV. Over 163-176 the chain is Cytoplasmic; that stretch reads RNPYYKSEEKRKKK. The ER retention motif motif lies at 172-176; sequence KRKKK.

It belongs to the TMEM97/sigma-2 receptor family. As to quaternary structure, homodimer. Interacts with NPC1; the interaction impairs NPC1-mediated cholesterol transport. Interacts with PGRMC1 and LDLR; the interaction increases LDL internalization. Interacts with histatin 1/HTN1; the interaction induces HTN1-stimulating wound healing. Interacts with TSPO.

It localises to the rough endoplasmic reticulum membrane. Its subcellular location is the nucleus membrane. Its function is as follows. Sigma-2 receptor which contributes to ameliorate dysfunctional cellular processes and slow degenerative progression by regulating cell functions including cholesterol biosynthesis/trafficking, membrane trafficking, autophagy, lipid membrane-bound protein trafficking, and receptor stabilization at the cell surface. Forms a ternary complex with PGRMC1 receptor and low density lipoprotein receptor/LDLR at the plasma membrane, which increases LDLR-mediated LDL cholesterol internalization. Decreases lysosomal sterol transporter NPC1 availability to the cell, probably through NPC1-binding, hence controlling lipid transport, including cholesterol and LBPA, outside of late endosome/lysosome. Binds regio- and stereoselective ligand 20(S)-hydroxycholesterol (20(S)-OHC) which enhances TMEM97-NPC1 interaction and decreases TMEM97-PGRMC1 and TMEM97-TSPO interactions, thereby linking OHC binding to cholesterol homeostasis. Also able to bind cholesterol. Binds histatin 1 (Hst 1)/HN1 salivary peptide at the ER membrane, which is critical for increasing mitochondria-ER contacts and stimulating Hst1 wound healing properties. May alter the activity of some cytochrome P450 proteins. Although shows homologies with sterol isomerases (EXPERA domain), not able to catalyze sterol isomerization. However, may act as sensors of these molecules. Acts as a quality control factor in the ER, promoting the proteolytic degradation of nonproductive and extramitochondrial precursor proteins in the ER membrane thus removing them from the ER surface. The sequence is that of Sigma intracellular receptor 2 (TMEM97) from Bos taurus (Bovine).